We begin with the raw amino-acid sequence, 28 residues long: Trypsin inhibitor A (28 aa).

Intrachain disulfides connect C3–C20, C10–C22, and C16–C27.

It belongs to the protease inhibitor I7 (squash-type serine protease inhibitor) family.

It localises to the secreted. Functionally, inhibits trypsin. The protein is Trypsin inhibitor A of Momordica charantia (Bitter gourd).